The following is a 614-amino-acid chain: Sodium- and chloride-dependent betaine transporter (614 aa).

At M1 to E44 the chain is on the cytoplasmic side. A run of 3 helical transmembrane segments spans residues F45 to L65, A73 to L92, and G117 to L137. Over A138 to R210 the chain is Extracellular. N171 and N183 each carry an N-linked (GlcNAc...) asparagine glycan. Transmembrane regions (helical) follow at residues W211–W229, V238–I255, I291–Y308, I320–L341, M374–L393, L423–T441, G458–A478, I499–S518, and I538–I556. At T557–L614 the chain is on the cytoplasmic side. Residues T574 to P600 form a disordered region. S586 is subject to Phosphoserine. Polar residues predominate over residues Q588–P600.

The protein belongs to the sodium:neurotransmitter symporter (SNF) (TC 2.A.22) family. SLC6A12 subfamily. As to quaternary structure, interacts with LIN7C.

The protein localises to the basolateral cell membrane. Its subcellular location is the cell membrane. It carries out the reaction 4-aminobutanoate(out) + chloride(out) + 3 Na(+)(out) = 4-aminobutanoate(in) + chloride(in) + 3 Na(+)(in). The catalysed reaction is glycine betaine(out) + 2 chloride(out) + 3 Na(+)(out) = glycine betaine(in) + 2 chloride(in) + 3 Na(+)(in). In terms of biological role, transporter that mediates cellular uptake of betaine and GABA in a sodium- and chloride-dependent process. May have a role in regulation of GABAergic transmission in the brain through the reuptake of GABA into presynaptic terminals, as well as in osmotic regulation. Probably also involved in renal and hepatic osmotic regulation. The protein is Sodium- and chloride-dependent betaine transporter (Slc6a12) of Rattus norvegicus (Rat).